Consider the following 248-residue polypeptide: Large ribosomal subunit protein uL4 (248 aa).

Residues 69–92 (HVPRLKNGSRAAKVPQAKGGREAH) form a disordered region.

It belongs to the universal ribosomal protein uL4 family. Part of the 50S ribosomal subunit.

One of the primary rRNA binding proteins, this protein initially binds near the 5'-end of the 23S rRNA. It is important during the early stages of 50S assembly. It makes multiple contacts with different domains of the 23S rRNA in the assembled 50S subunit and ribosome. Its function is as follows. Forms part of the polypeptide exit tunnel. The protein is Large ribosomal subunit protein uL4 of Methanoregula boonei (strain DSM 21154 / JCM 14090 / 6A8).